The chain runs to 244 residues: 5-oxoprolinase subunit A (244 aa).

The protein belongs to the LamB/PxpA family. In terms of assembly, forms a complex composed of PxpA, PxpB and PxpC.

It carries out the reaction 5-oxo-L-proline + ATP + 2 H2O = L-glutamate + ADP + phosphate + H(+). Catalyzes the cleavage of 5-oxoproline to form L-glutamate coupled to the hydrolysis of ATP to ADP and inorganic phosphate. This Salmonella dublin (strain CT_02021853) protein is 5-oxoprolinase subunit A.